The chain runs to 252 residues: Triosephosphate isomerase (252 aa).

9–11 (NWK) provides a ligand contact to substrate. His96 functions as the Electrophile in the catalytic mechanism. Glu166 functions as the Proton acceptor in the catalytic mechanism. Substrate contacts are provided by residues Gly172, Ser212, and 233–234 (GG).

Belongs to the triosephosphate isomerase family. Homodimer.

The protein resides in the cytoplasm. The enzyme catalyses D-glyceraldehyde 3-phosphate = dihydroxyacetone phosphate. Its pathway is carbohydrate biosynthesis; gluconeogenesis. It functions in the pathway carbohydrate degradation; glycolysis; D-glyceraldehyde 3-phosphate from glycerone phosphate: step 1/1. Functionally, involved in the gluconeogenesis. Catalyzes stereospecifically the conversion of dihydroxyacetone phosphate (DHAP) to D-glyceraldehyde-3-phosphate (G3P). The chain is Triosephosphate isomerase from Prosthecochloris aestuarii (strain DSM 271 / SK 413).